Consider the following 878-residue polypeptide: Alanine--tRNA ligase (878 aa).

4 residues coordinate Zn(2+): His-562, His-566, Cys-670, and His-674.

It belongs to the class-II aminoacyl-tRNA synthetase family. Zn(2+) is required as a cofactor.

Its subcellular location is the cytoplasm. It catalyses the reaction tRNA(Ala) + L-alanine + ATP = L-alanyl-tRNA(Ala) + AMP + diphosphate. Its function is as follows. Catalyzes the attachment of alanine to tRNA(Ala) in a two-step reaction: alanine is first activated by ATP to form Ala-AMP and then transferred to the acceptor end of tRNA(Ala). Also edits incorrectly charged Ser-tRNA(Ala) and Gly-tRNA(Ala) via its editing domain. The sequence is that of Alanine--tRNA ligase from Acinetobacter baumannii (strain ACICU).